A 688-amino-acid polypeptide reads, in one-letter code: PTS system glucoside-specific EIICBA component (688 aa).

One can recognise a PTS EIIC type-1 domain in the interval lysine 3–aspartate 427. 10 helical membrane passes run isoleucine 12–phenylalanine 32, leucine 81–methionine 101, leucine 137–leucine 157, phenylalanine 182–tryptophan 202, leucine 223–isoleucine 243, alanine 284–isoleucine 304, valine 315–proline 335, phenylalanine 340–leucine 360, leucine 364–glycine 384, and leucine 395–isoleucine 415. Residues alanine 438–lysine 519 form the PTS EIIB type-1 domain. Cysteine 460 serves as the catalytic Phosphocysteine intermediate; for EIIB activity. The PTS EIIA type-1 domain occupies aspartate 560–asparagine 664. The active-site Tele-phosphohistidine intermediate; for EIIA activity is the histidine 612.

Its subcellular location is the cell membrane. Functionally, the phosphoenolpyruvate-dependent sugar phosphotransferase system (sugar PTS), a major carbohydrate active -transport system, catalyzes the phosphorylation of incoming sugar substrates concomitantly with their translocation across the cell membrane. This system is involved in alpha- and beta-glucoside transport. The chain is PTS system glucoside-specific EIICBA component (glcB) from Staphylococcus aureus (strain JH1).